The following is a 242-amino-acid chain: MLHNPLVQFDIKKLIDIKVMDFDISFTNSAAYMLLASVLALTYFYLAFSNPRLVPSRLQISGEIIYNLVTDMLNQNVGSKGRKFVPVIFTLFVFILFCNLFGMIPYGFTVTSHIIITFALAILVFLMVTIVGFVKHGMHFLSLFLPHGTPLWLAPLMIIIELFTYLARPASLSLRLAANMMAGHILLKVIASFVVTLMIYLKFLPIPLMVILIGFEIFVAILQAYIFTILSCVYLNDAVNLH.

The next 6 helical transmembrane spans lie at 29-49, 84-104, 114-134, 140-160, 189-209, and 210-230; these read SAAYMLLASVLALTYFYLAFS, FVPVIFTLFVFILFCNLFGMI, IIITFALAILVFLMVTIVGFV, FLSLFLPHGTPLWLAPLMIII, VIASFVVTLMIYLKFLPIPLM, and VILIGFEIFVAILQAYIFTIL.

Belongs to the ATPase A chain family. In terms of assembly, F-type ATPases have 2 components, CF(1) - the catalytic core - and CF(0) - the membrane proton channel. CF(1) has five subunits: alpha(3), beta(3), gamma(1), delta(1), epsilon(1). CF(0) has three main subunits: a(1), b(2) and c(9-12). The alpha and beta chains form an alternating ring which encloses part of the gamma chain. CF(1) is attached to CF(0) by a central stalk formed by the gamma and epsilon chains, while a peripheral stalk is formed by the delta and b chains.

The protein resides in the cell inner membrane. Its function is as follows. Key component of the proton channel; it plays a direct role in the translocation of protons across the membrane. The chain is ATP synthase subunit a from Rickettsia bellii (strain RML369-C).